The primary structure comprises 189 residues: Cytochrome bo(3) ubiquinol oxidase subunit 3 (189 aa).

Over 1-10 (MIKETMRNNK) the chain is Cytoplasmic. A helical membrane pass occupies residues 11 to 31 (LFGLWIYLMSDCIIFAVLFAV). At 32-52 (YAIISSNFSTNLINHKIFNLS) the chain is on the extracellular side. Residues 53–73 (YVFLETLILLLSSLSSGMLTI) form a helical membrane-spanning segment. At 74 to 81 (QKNKNNIK) the chain is on the cytoplasmic side. A helical membrane pass occupies residues 82 to 102 (IIYFYLLLTFFLGLSFLLMEV). Residues 103-122 (NEFYKLILENCSPSQHAFFS) lie on the Extracellular side of the membrane. The chain crosses the membrane as a helical span at residues 123 to 143 (IFFTIVGVHGIHVFFGLIFIL). Residues 144-161 (SILYQLFYLGITNTIRIR) are Cytoplasmic-facing. Residues 162-182 (ILCFSLFWHFLDIIWICVFTF) form a helical membrane-spanning segment. The Extracellular segment spans residues 183-189 (VYLNGVI).

This sequence belongs to the cytochrome c oxidase subunit 3 family. Heterooctamer of two A chains, two B chains, two C chains and two D chains.

It localises to the cell membrane. Its function is as follows. Cytochrome bo(3) ubiquinol terminal oxidase is the component of the aerobic respiratory chain of E.coli that predominates when cells are grown at high aeration. Has proton pump activity across the membrane in addition to electron transfer, pumping 2 protons/electron. This Buchnera aphidicola subsp. Schizaphis graminum (strain Sg) protein is Cytochrome bo(3) ubiquinol oxidase subunit 3 (cyoC).